Consider the following 491-residue polypeptide: MATFKDACYHYRKISKLNSSILKLGANDEWRPAPITKFKGWCLDCCQYTNLTYCRGCALYHVCQWCSQYNRCFLDEEPHLLRMRTFKNTISKEDIENLLNMYDTLFPIHEKIVNKFINNVKQRKCRNEYLLEWYNHLLLPFTLQALTIQLENNTYYIFGYYDCMEQENQTPFNFVNLVSNYDKLLLDDKNFNRMAYLPPILQQEYALRYFSKSRFLDKPNRGLKRNDFSDNLMEDRHSPTSLMQVIRNCVAKHLDDSEWNKACTQVTNAKNYMEVMNSAYTEHYSVSQRCKLYTKNKLNTLSRLTKPNYILSNHETCALNVHNCKWCQITSCYKIWEDFRIKKIYNNVLDFIRALSKSNGMAGHCSSQERIYRYIPKLFLIYDEEQWTESVNSLFKCLEPVEISEVEYVLFDHEINWEVRGLILQCMNGSIPRILNLSDVRLILSSLIYDWFDIRYMRDTPMITSTTNELRKLNKKNELIDEYDLELSDIE.

The RNA-binding stretch occupies residues 1–81 (MATFKDACYH…CFLDEEPHLL (81 aa)). The interval 42-79 (CLDCCQYTNLTYCRGCALYHVCQWCSQYNRCFLDEEPH) is zinc-binding domain. The segment at 82–176 (RMRTFKNTIS…ENQTPFNFVN (95 aa)) is important for cytoskeleton localization. Residues 320–491 (NVHNCKWCQI…EYDLELSDIE (172 aa)) are interaction with host IRF3. Positions 485 to 488 (LELS) match the pLxIS motif motif.

This sequence belongs to the rotavirus NSP1 family. Interacts (via C-terminus) with host IRF3; this interaction leads to IRF3 degradation. Interacts with host IRF7; this interaction leads to IRF7 degradation. Interacts with host CUL1 and CUL3.

Its subcellular location is the host cytoplasm. It localises to the host cytoskeleton. In terms of biological role, plays a role in the inhibition of host innate immunity by inducing the degradation of key host factors required to activate interferon production such as IRF3, IRF5 or IRF7. Associates with components of cullin RING ligases (CRLs) including CUL1 or CUL3, which are essential multisubunit ubiquitination complexes, to modulate their activities. This is Non-structural protein 1 from Bos taurus (Bovine).